Consider the following 149-residue polypeptide: Deoxyuridine 5'-triphosphate nucleotidohydrolase (149 aa).

Residues 66 to 68 (RSG), Asn-79, 83 to 85 (TID), and Lys-93 each bind substrate.

Belongs to the dUTPase family. It depends on Mg(2+) as a cofactor.

It catalyses the reaction dUTP + H2O = dUMP + diphosphate + H(+). It functions in the pathway pyrimidine metabolism; dUMP biosynthesis; dUMP from dCTP (dUTP route): step 2/2. Functionally, this enzyme is involved in nucleotide metabolism: it produces dUMP, the immediate precursor of thymidine nucleotides and it decreases the intracellular concentration of dUTP so that uracil cannot be incorporated into DNA. This is Deoxyuridine 5'-triphosphate nucleotidohydrolase from Corynebacterium glutamicum (strain ATCC 13032 / DSM 20300 / JCM 1318 / BCRC 11384 / CCUG 27702 / LMG 3730 / NBRC 12168 / NCIMB 10025 / NRRL B-2784 / 534).